Consider the following 55-residue polypeptide: uncharacterized protein (55 aa).

This is an uncharacterized protein from Mycobacterium tuberculosis (strain ATCC 25618 / H37Rv).